The sequence spans 98 residues: MPSISINITLAFTAALLGMLMFRSHMMSSLLCLEGMMLSMFILSTLIILNTQFTMSFIMPILLLVFAACEAAIGLALLVMVSNTYGLDHIQNLNLLQC.

Transmembrane regions (helical) follow at residues Pro-2–Phe-22, Ser-29–Leu-49, and Ile-61–Val-81.

It belongs to the complex I subunit 4L family. In terms of assembly, core subunit of respiratory chain NADH dehydrogenase (Complex I) which is composed of 45 different subunits.

It localises to the mitochondrion inner membrane. The catalysed reaction is a ubiquinone + NADH + 5 H(+)(in) = a ubiquinol + NAD(+) + 4 H(+)(out). Its function is as follows. Core subunit of the mitochondrial membrane respiratory chain NADH dehydrogenase (Complex I) which catalyzes electron transfer from NADH through the respiratory chain, using ubiquinone as an electron acceptor. Part of the enzyme membrane arm which is embedded in the lipid bilayer and involved in proton translocation. This is NADH-ubiquinone oxidoreductase chain 4L (MT-ND4L) from Microcebus griseorufus (Gray-brown mouse lemur).